The sequence spans 417 residues: Phosphoglycerate kinase 2 (417 aa).

Phosphoserine is present on S4. K11 is modified (N6-acetyllysine). V23, D24, F25, N26, Q38, and R39 together coordinate (2R)-3-phosphoglycerate. K48 carries the post-translational modification N6-acetyllysine. Residues S62, H63, G65, and R66 each coordinate (2R)-3-phosphoglycerate. N6-acetyllysine occurs at positions 75, 86, and 97. (2R)-3-phosphoglycerate-binding residues include L122 and R123. N6-acetyllysine is present on residues K131 and K146. (2R)-3-phosphoglycerate contacts are provided by H170 and R171. Y196 carries the phosphotyrosine modification. K199 carries the N6-acetyllysine modification. G214 is an ADP binding site. G214 contributes to the CDP binding site. Positions 215 and 216 each coordinate AMP. A215 serves as a coordination point for ATP. Mg(2+) is bound at residue A215. Position 219 (D219) interacts with CDP. D219 provides a ligand contact to Mg(2+). K220 serves as a coordination point for AMP. K220 is a binding site for ATP. G238 contributes to the ADP binding site. G238 lines the CDP pocket. G239 serves as a coordination point for AMP. An ATP-binding site is contributed by G239. An N6-acetyllysine mark is found at K267 and K291. G313 is a binding site for AMP. G313 contacts ATP. CDP contacts are provided by G338, I340, and F343. F343 contributes to the ADP binding site. E344 is an AMP binding site. Residues E344, D375, and T376 each coordinate ATP. D375 contributes to the Mg(2+) binding site.

The protein belongs to the phosphoglycerate kinase family. Monomer. It depends on Mg(2+) as a cofactor. In terms of tissue distribution, testis and sperm. Localized on the principle piece in the sperm (at protein level). Testis-specific.

It is found in the cytoplasm. The enzyme catalyses (2R)-3-phosphoglycerate + ATP = (2R)-3-phospho-glyceroyl phosphate + ADP. It participates in carbohydrate degradation; glycolysis; pyruvate from D-glyceraldehyde 3-phosphate: step 2/5. In terms of biological role, essential for sperm motility and male fertility but is not required for the completion of spermatogenesis. The chain is Phosphoglycerate kinase 2 (Pgk2) from Mus musculus (Mouse).